A 177-amino-acid chain; its full sequence is von Ebner gland protein 2 (177 aa).

Positions 1–18 (MKALLLTFSLSLLAALQA) are cleaved as a signal peptide. Cysteine 80 and cysteine 172 are joined by a disulfide.

The protein belongs to the calycin superfamily. Lipocalin family. In terms of assembly, homodimer.

Its subcellular location is the secreted. In terms of biological role, could play a role in taste reception. Could be necessary for the concentration and delivery of sapid molecules in the gustatory system. This chain is von Ebner gland protein 2 (Vegp2), found in Rattus norvegicus (Rat).